The chain runs to 175 residues: Disulfide bond formation protein B (175 aa).

Residues 1–13 are Cytoplasmic-facing; sequence MTALTRFAHSRSS. The helical transmembrane segment at 14–30 threads the bilayer; that stretch reads WFLLTGTAIGLEAAALY. At 31–48 the chain is on the periplasmic side; that stretch reads FQYVMKLDPCVMCIYQRL. Cysteines 40 and 43 form a disulfide. The helical transmembrane segment at 49 to 64 threads the bilayer; it reads AVFGILVAGLIGMTAP. Residues 65–71 are Cytoplasmic-facing; the sequence is KYRLIRI. Residues 72 to 89 traverse the membrane as a helical segment; sequence LGASCWAVSATWGLKLAL. The Periplasmic portion of the chain corresponds to 90-144; the sequence is ALVNMQNNPSPFATCSFLPEFPTWMPLHEWFPAVMLPTGMCTDLPWRFMDVTMAE. The cysteines at positions 104 and 130 are disulfide-linked. A helical transmembrane segment spans residues 145-163; sequence WMVVVFSTFLVIWLLFIVP. At 164–175 the chain is on the cytoplasmic side; that stretch reads ILSGSTKPSLYK.

This sequence belongs to the DsbB family.

It is found in the cell inner membrane. Required for disulfide bond formation in some periplasmic proteins. Acts by oxidizing the DsbA protein. In Shewanella sp. (strain W3-18-1), this protein is Disulfide bond formation protein B.